A 684-amino-acid chain; its full sequence is MDVNSRAKIRPLDQLVINKIAAGEIIERPENAIKELIENSLDAGSTSIDVLLKDGGLKLLQITDNGSGIQYDDLPYLCQRFSTSKIDNFNDLQHLQTFGFRGEALASISHVAKVTVVTKLSSDIHAWKAFYVDGALAPISPGMSPAPQPCAGKQGTVITAEDLFYNVRSRKSALKNGSEEFRRIMILVQKYAIHNDQVSFNCKKVGDTVASLSLSSRLSKADKIRHIYGPRVASHLRDFSLGEGQSSIVGFSANGFISNADFQDKKSNLILFINNRLVESVELRHALEETYAKYLHKGASYFVYLSLNMSPEQLDVNVHPSKRIVHFLYDQEIATSICDKLGEILERTDTERSYPLQAMIPSISNTKNAESSSQKAVRTYENYLVRTDPRERSIKSMLSDNFLQRSSNNYDNEIIEKVDSANSNKNATNDIKDLQTEEIVEEGNSIDLESIKSLQKQVINSMHVLATNILTEHKYVGLVCPTRRIAAVQHNIGLYVVDYGKLSYHLFYQICLTEFGNYGEFVLETPLSISDLFEIVNGDEDKSESEKFTRLLVSRRDMLKDYFSISVTSGGLLTAVPMLSPKYHPPFEQLPLLISSLTPKFFDWLDEKSCLNGIMKAIAKFYVPLPLSYEESDVKSIRSLESCLEDYLFPEFRRRVICPKKVFEEKCIYQITSLPRLYNVFERC.

The protein belongs to the DNA mismatch repair MutL/HexB family.

It is found in the nucleus. Functionally, this protein is involved in the repair of mismatches in DNA. In Schizosaccharomyces pombe (strain 972 / ATCC 24843) (Fission yeast), this protein is Putative MutL protein homolog 1 (mlh1).